The primary structure comprises 396 residues: Flap endonuclease 1 (396 aa).

Residues 1–105 form an N-domain region; sequence MGIHGLTKLL…DQLAQRTERR (105 aa). D34 is a binding site for Mg(2+). Residue R71 participates in DNA binding. Residues D87, E159, E161, D180, and D182 each contribute to the Mg(2+) site. An I-domain region spans residues 123–254; it reads AIEKYSKRSV…VRALQMIKKH (132 aa). E159 contacts DNA. Residues G232 and D234 each contribute to the DNA site. D234 lines the Mg(2+) pocket. Residues 338 to 346 are interaction with PCNA; sequence NQGRLESFF. The tract at residues 341–396 is disordered; that stretch reads RLESFFTSLPKPATADKAKPKEDDKKRKAGAAAGGKDAKGGAAAKKGKFGVGGGKK. Positions 354–366 are enriched in basic and acidic residues; that stretch reads TADKAKPKEDDKK. The segment covering 370-384 has biased composition (low complexity); it reads GAAAGGKDAKGGAAA.

This sequence belongs to the XPG/RAD2 endonuclease family. FEN1 subfamily. In terms of assembly, interacts with PCNA. Three molecules of FEN1 bind to one PCNA trimer with each molecule binding to one PCNA monomer. PCNA stimulates the nuclease activity without altering cleavage specificity. Mg(2+) serves as cofactor. Post-translationally, phosphorylated. Phosphorylation upon DNA damage induces relocalization to the nuclear plasma.

The protein localises to the nucleus. It is found in the nucleolus. It localises to the nucleoplasm. The protein resides in the mitochondrion. Functionally, structure-specific nuclease with 5'-flap endonuclease and 5'-3' exonuclease activities involved in DNA replication and repair. During DNA replication, cleaves the 5'-overhanging flap structure that is generated by displacement synthesis when DNA polymerase encounters the 5'-end of a downstream Okazaki fragment. It enters the flap from the 5'-end and then tracks to cleave the flap base, leaving a nick for ligation. Also involved in the long patch base excision repair (LP-BER) pathway, by cleaving within the apurinic/apyrimidinic (AP) site-terminated flap. Acts as a genome stabilization factor that prevents flaps from equilibrating into structures that lead to duplications and deletions. Also possesses 5'-3' exonuclease activity on nicked or gapped double-stranded DNA, and exhibits RNase H activity. Also involved in replication and repair of rDNA and in repairing mitochondrial DNA. The protein is Flap endonuclease 1 of Chlamydomonas reinhardtii (Chlamydomonas smithii).